A 278-amino-acid polypeptide reads, in one-letter code: Elongation factor Ts (278 aa).

Residues 82–85 (TDFV) form an involved in Mg(2+) ion dislocation from EF-Tu region.

Belongs to the EF-Ts family.

The protein localises to the cytoplasm. Functionally, associates with the EF-Tu.GDP complex and induces the exchange of GDP to GTP. It remains bound to the aminoacyl-tRNA.EF-Tu.GTP complex up to the GTP hydrolysis stage on the ribosome. In Streptomyces ramocissimus, this protein is Elongation factor Ts (tsf).